The following is a 209-amino-acid chain: Guanylate kinase (209 aa).

A Guanylate kinase-like domain is found at 16–198; sequence GRLVIISGPS…AVTEICQILL (183 aa). 23–30 serves as a coordination point for ATP; it reads GPSGAGKS.

The protein belongs to the guanylate kinase family.

The protein resides in the cytoplasm. It catalyses the reaction GMP + ATP = GDP + ADP. Functionally, essential for recycling GMP and indirectly, cGMP. The polypeptide is Guanylate kinase (Rhodopirellula baltica (strain DSM 10527 / NCIMB 13988 / SH1)).